A 652-amino-acid chain; its full sequence is tRNA 5-methylaminomethyl-2-thiouridine biosynthesis bifunctional protein MnmC (652 aa).

A tRNA (mnm(5)s(2)U34)-methyltransferase region spans residues 1–227 (MLSWKNDLTP…KREMLTGKYS (227 aa)). An FAD-dependent cmnm(5)s(2)U34 oxidoreductase region spans residues 259–652 (IGAGIAGSTL…ARFLYRRIRK (394 aa)).

This sequence in the N-terminal section; belongs to the methyltransferase superfamily. tRNA (mnm(5)s(2)U34)-methyltransferase family. It in the C-terminal section; belongs to the DAO family. FAD is required as a cofactor.

It is found in the cytoplasm. It carries out the reaction 5-aminomethyl-2-thiouridine(34) in tRNA + S-adenosyl-L-methionine = 5-methylaminomethyl-2-thiouridine(34) in tRNA + S-adenosyl-L-homocysteine + H(+). Functionally, catalyzes the last two steps in the biosynthesis of 5-methylaminomethyl-2-thiouridine (mnm(5)s(2)U) at the wobble position (U34) in tRNA. Catalyzes the FAD-dependent demodification of cmnm(5)s(2)U34 to nm(5)s(2)U34, followed by the transfer of a methyl group from S-adenosyl-L-methionine to nm(5)s(2)U34, to form mnm(5)s(2)U34. This is tRNA 5-methylaminomethyl-2-thiouridine biosynthesis bifunctional protein MnmC from Leptospira borgpetersenii serovar Hardjo-bovis (strain JB197).